Consider the following 51-residue polypeptide: Large ribosomal subunit protein eL39 (51 aa).

The protein belongs to the eukaryotic ribosomal protein eL39 family.

The sequence is that of Large ribosomal subunit protein eL39 from Thermococcus gammatolerans (strain DSM 15229 / JCM 11827 / EJ3).